Consider the following 245-residue polypeptide: Aquaporin SIP1-1 (245 aa).

The next 2 helical transmembrane spans lie at 14 to 34 (AVVTFLWVLCASALGASTAAV) and 55 to 75 (LLSVLLFTFDLLCGALGGASF). The NPA 1 motif lies at 76-78 (NPT). The next 3 membrane-spanning stretches (helical) occupy residues 100-120 (FPAQAAGAVGGALAISELMPA), 138-158 (GALAEGVLTFVITLTVLWVIV), and 164-184 (VILKTLLLSTSIVSVILAGAE). An NPA 2 motif is present at residues 191–193 (NPA). Residues 213–233 (VYWICPFIGAMLAGWIFRVVF) form a helical membrane-spanning segment.

The protein belongs to the MIP/aquaporin (TC 1.A.8) family. SIP (TC 1.A.8.10) subfamily.

Its subcellular location is the membrane. Its function is as follows. Aquaporins facilitate the transport of water and small neutral solutes across cell membranes. The chain is Aquaporin SIP1-1 (SIP1-1) from Zea mays (Maize).